The following is a 78-amino-acid chain: Large ribosomal subunit protein bL28 (78 aa).

Residues 1-21 (MSRVCQVTGKRPVSGNNRSHA) form a disordered region.

Belongs to the bacterial ribosomal protein bL28 family.

This chain is Large ribosomal subunit protein bL28, found in Yersinia enterocolitica serotype O:8 / biotype 1B (strain NCTC 13174 / 8081).